A 314-amino-acid chain; its full sequence is Acetylglutamate kinase (314 aa).

Substrate is bound by residues 76–77 (GG), Arg98, and Asn199.

Belongs to the acetylglutamate kinase family. ArgB subfamily.

The protein resides in the cytoplasm. It catalyses the reaction N-acetyl-L-glutamate + ATP = N-acetyl-L-glutamyl 5-phosphate + ADP. Its pathway is amino-acid biosynthesis; L-arginine biosynthesis; N(2)-acetyl-L-ornithine from L-glutamate: step 2/4. Its function is as follows. Catalyzes the ATP-dependent phosphorylation of N-acetyl-L-glutamate. In Bifidobacterium longum (strain DJO10A), this protein is Acetylglutamate kinase.